The chain runs to 275 residues: Putative carbamate hydrolase RutD (275 aa).

The protein belongs to the AB hydrolase superfamily. Hydrolase RutD family.

It catalyses the reaction carbamate + 2 H(+) = NH4(+) + CO2. Its function is as follows. Involved in pyrimidine catabolism. May facilitate the hydrolysis of carbamate, a reaction that can also occur spontaneously. The chain is Putative carbamate hydrolase RutD from Escherichia coli O6:H1 (strain CFT073 / ATCC 700928 / UPEC).